Here is a 255-residue protein sequence, read N- to C-terminus: CD320 antigen (255 aa).

The signal sequence occupies residues 1 to 29 (MNGWVARGLARRAAALGLGLRVLLCFGLC). Over 30 to 203 (LEIAPTPIQT…SVQSGNRNVY (174 aa)) the chain is Extracellular. LDL-receptor class A domains are found at residues 52 to 89 (SCPP…EECG) and 120 to 157 (SCPE…LGCG). 6 disulfide bridges follow: Cys-53-Cys-66, Cys-60-Cys-79, Cys-73-Cys-88, Cys-121-Cys-134, Cys-128-Cys-147, and Cys-141-Cys-156. Ca(2+) is bound by residues Trp-71, Asp-74, Asp-76, Asp-78, Asp-84, and Glu-85. Trp-139, Asp-142, His-144, Asp-146, Asp-152, and Glu-153 together coordinate Ca(2+). N-linked (GlcNAc...) asparagine glycans are attached at residues Asn-177 and Asn-183. The helical transmembrane segment at 204–224 (GIIAAVAVLSISLAAGILFAL) threads the bilayer. Residues 225-255 (SRLCAQGCLAPLGLLVSMKGSLQPEKKTSVL) are Cytoplasmic-facing.

As to quaternary structure, interacts (via LDL-receptor class A domains) with TCN2.

It is found in the cell membrane. In terms of biological role, receptor for transcobalamin saturated with cobalamin (TCbl). Plays an important role in cobalamin uptake. Plasma membrane protein that is expressed on follicular dendritic cells (FDC) and mediates interaction with germinal center B cells. Functions as a costimulator to promote B cell responses to antigenic stimuli; promotes B cell differentiation and proliferation. Germinal center-B (GC-B) cells differentiate into memory B-cells and plasma cells (PC) through interaction with T-cells and follicular dendritic cells (FDC). CD320 augments the proliferation of PC precursors generated by IL-10. In Bos taurus (Bovine), this protein is CD320 antigen (CD320).